The chain runs to 373 residues: Inhibitor of nuclear factor kappa-B kinase-interacting protein (373 aa).

Positions 1–11 (MSEVKSRKKPG) are enriched in basic residues. Residues 1 to 38 (MSEVKSRKKPGPKVAAPEPEKRSDGRKNPEARGGAGWA) are disordered. Positions 18 to 30 (EPEKRSDGRKNPE) are enriched in basic and acidic residues. Residues 43-59 (GLSLLSLATSLGLAWLV) form a helical membrane-spanning segment. 2 coiled-coil regions span residues 64–257 (EKFA…DKLS) and 290–325 (TERK…LEGI). Asparagine 151 carries N-linked (GlcNAc...) asparagine glycosylation.

In terms of processing, N-glycosylated at Asn-151.

Its subcellular location is the endoplasmic reticulum membrane. Its function is as follows. Target of p53/TP53 with pro-apoptotic function. The chain is Inhibitor of nuclear factor kappa-B kinase-interacting protein (Ikbip) from Rattus norvegicus (Rat).